Here is a 297-residue protein sequence, read N- to C-terminus: Probable deoxyhypusine synthase (297 aa).

Lys265 acts as the Nucleophile in catalysis.

Belongs to the deoxyhypusine synthase family. NAD(+) serves as cofactor.

It carries out the reaction [eIF5A protein]-L-lysine + spermidine = [eIF5A protein]-deoxyhypusine + propane-1,3-diamine. It participates in protein modification; eIF5A hypusination. Its function is as follows. Catalyzes the NAD-dependent oxidative cleavage of spermidine and the subsequent transfer of the butylamine moiety of spermidine to the epsilon-amino group of a specific lysine residue of the eIF-5A precursor protein to form the intermediate deoxyhypusine residue. This Methanopyrus kandleri (strain AV19 / DSM 6324 / JCM 9639 / NBRC 100938) protein is Probable deoxyhypusine synthase.